The sequence spans 148 residues: Tetratricopeptide repeat protein 32 (148 aa).

TPR repeat units follow at residues 12–45 (SSAALATAQARFSRGEFAEARELYSAFIGQCARH), 55–88 (ATAYNNRGQTKYFSVDFYEAMDDYTSAIEILPSF), and 89–122 (EVPYYNRGLIRYRLGYFDEALEDFKKALDLNPGF).

This is Tetratricopeptide repeat protein 32 (Ttc32) from Mus musculus (Mouse).